Consider the following 209-residue polypeptide: ATP-dependent Clp protease proteolytic subunit 1 (209 aa).

The active-site Nucleophile is the Ser-109. His-134 is a catalytic residue.

This sequence belongs to the peptidase S14 family. As to quaternary structure, fourteen ClpP subunits assemble into 2 heptameric rings which stack back to back to give a disk-like structure with a central cavity, resembling the structure of eukaryotic proteasomes.

It is found in the cytoplasm. It catalyses the reaction Hydrolysis of proteins to small peptides in the presence of ATP and magnesium. alpha-casein is the usual test substrate. In the absence of ATP, only oligopeptides shorter than five residues are hydrolyzed (such as succinyl-Leu-Tyr-|-NHMec, and Leu-Tyr-Leu-|-Tyr-Trp, in which cleavage of the -Tyr-|-Leu- and -Tyr-|-Trp bonds also occurs).. Functionally, cleaves peptides in various proteins in a process that requires ATP hydrolysis. Has a chymotrypsin-like activity. Plays a major role in the degradation of misfolded proteins. This Corynebacterium diphtheriae (strain ATCC 700971 / NCTC 13129 / Biotype gravis) protein is ATP-dependent Clp protease proteolytic subunit 1.